The following is a 340-amino-acid chain: Tetraacyldisaccharide 4'-kinase (340 aa).

51–58 (HMGGAGKT) is a binding site for ATP.

It belongs to the LpxK family.

The catalysed reaction is a lipid A disaccharide + ATP = a lipid IVA + ADP + H(+). It functions in the pathway glycolipid biosynthesis; lipid IV(A) biosynthesis; lipid IV(A) from (3R)-3-hydroxytetradecanoyl-[acyl-carrier-protein] and UDP-N-acetyl-alpha-D-glucosamine: step 6/6. In terms of biological role, transfers the gamma-phosphate of ATP to the 4'-position of a tetraacyldisaccharide 1-phosphate intermediate (termed DS-1-P) to form tetraacyldisaccharide 1,4'-bis-phosphate (lipid IVA). In Rhodopseudomonas palustris (strain ATCC BAA-98 / CGA009), this protein is Tetraacyldisaccharide 4'-kinase.